Here is a 238-residue protein sequence, read N- to C-terminus: tRNA (guanine-N(1)-)-methyltransferase (238 aa).

S-adenosyl-L-methionine-binding positions include Gly-109 and 129–134; that span reads IGDFVL.

The protein belongs to the RNA methyltransferase TrmD family. As to quaternary structure, homodimer.

It is found in the cytoplasm. It catalyses the reaction guanosine(37) in tRNA + S-adenosyl-L-methionine = N(1)-methylguanosine(37) in tRNA + S-adenosyl-L-homocysteine + H(+). Functionally, specifically methylates guanosine-37 in various tRNAs. The polypeptide is tRNA (guanine-N(1)-)-methyltransferase (Exiguobacterium sp. (strain ATCC BAA-1283 / AT1b)).